The chain runs to 694 residues: Elongation factor G (694 aa).

In terms of domain architecture, tr-type G spans 8-282; sequence DRLRNIGIMA…AIVDYLPSPL (275 aa). GTP contacts are provided by residues 17-24, 81-85, and 135-138; these read AHIDAGKT, DTPGH, and NKMD. The tract at residues 284–303 is disordered; that stretch reads IPPVQGTDPETGEPAERKAD.

Belongs to the TRAFAC class translation factor GTPase superfamily. Classic translation factor GTPase family. EF-G/EF-2 subfamily.

It localises to the cytoplasm. Catalyzes the GTP-dependent ribosomal translocation step during translation elongation. During this step, the ribosome changes from the pre-translocational (PRE) to the post-translocational (POST) state as the newly formed A-site-bound peptidyl-tRNA and P-site-bound deacylated tRNA move to the P and E sites, respectively. Catalyzes the coordinated movement of the two tRNA molecules, the mRNA and conformational changes in the ribosome. The chain is Elongation factor G from Symbiobacterium thermophilum (strain DSM 24528 / JCM 14929 / IAM 14863 / T).